The chain runs to 264 residues: Astacin-like metalloprotease toxin 1 (264 aa).

The signal sequence occupies residues 1 to 16 (MIKYIGVFAFLVGGFC). A propeptide spanning residues 17–51 (HDFETVISNQDPIVDGMRLVEGDMLFDDGPLFTER) is cleaved from the precursor. Residues 52–249 (NAVKYDQQLW…VKVNKLYKCP (198 aa)) form the Peptidase M12A domain. Cystine bridges form between C93–C248 and C114–C135. H143 is a Zn(2+) binding site. E144 is an active-site residue. Zn(2+) is bound by residues H147 and H153. Residues N173 and N185 are each glycosylated (N-linked (GlcNAc...) asparagine).

In terms of assembly, monomer. Zn(2+) is required as a cofactor. In terms of tissue distribution, expressed by the venom gland.

It is found in the secreted. With respect to regulation, inhibited by 1,10-phenanthroline. Zinc metalloprotease. Provoques deadhesion of endothelial cells from cell cultures, and also degradation of fibronectin, fibrinogen and gelatin in vitro. Its role in the venom is not fully understood but it might act as a spreading factor that facilitates diffusion of other venom toxins. Alternatively, it might be involved in the proteolytic processing of other venom toxins or it might play a role in extra-oral digestion of prey. This chain is Astacin-like metalloprotease toxin 1, found in Loxosceles intermedia (Brown spider).